Here is an 879-residue protein sequence, read N- to C-terminus: Prostaglandin F2 receptor negative regulator (879 aa).

The signal sequence occupies residues Met-1 to Arg-25. Ig-like C2-type domains are found at residues Val-26 to Gln-129 and Pro-149 to Glu-268. Residues Val-26–Pro-832 lie on the Extracellular side of the membrane. Cystine bridges form between Cys-43–Cys-119 and Cys-169–Cys-247. An N-linked (GlcNAc...) asparagine glycan is attached at Asn-44. Thr-271 carries the post-translational modification Phosphothreonine. Ig-like C2-type domains follow at residues Pro-276–Ser-394, Pro-406–Ser-536, Ala-544–Pro-662, and Pro-688–His-813. N-linked (GlcNAc...) asparagine glycans are attached at residues Asn-286, Asn-300, Asn-383, and Asn-413. An intrachain disulfide couples Cys-299 to Cys-373. Residues Pro-424–Leu-427 carry the Endoplasmic reticulum retention signal motif. Cys-429 and Cys-515 form a disulfide bridge. N-linked (GlcNAc...) asparagine glycans are attached at residues Asn-525, Asn-600, Asn-618, and Asn-691. The cysteines at positions 571 and 655 are disulfide-linked. The short motif at Arg-703 to Asp-705 is the Cell attachment site element. Cys-711 and Cys-793 are joined by a disulfide. Residues Leu-833–Cys-853 traverse the membrane as a helical segment. The Cytoplasmic portion of the chain corresponds to Ser-854–Asp-879.

As to quaternary structure, interacts with CD9 and CD81. Part of a complex composed of CD9, CD81 and IGSF8. Also seems to interact with CD63, CD82 and CD151.

The protein resides in the endoplasmic reticulum membrane. The protein localises to the golgi apparatus. Its subcellular location is the trans-Golgi network membrane. Inhibits the binding of prostaglandin F2-alpha (PGF2-alpha) to its specific FP receptor, by decreasing the receptor number rather than the affinity constant. Functional coupling with the prostaglandin F2-alpha receptor seems to occur. In myoblasts, associates with tetraspanins CD9 and CD81 to prevent myotube fusion during muscle regeneration. The polypeptide is Prostaglandin F2 receptor negative regulator (PTGFRN) (Homo sapiens (Human)).